A 268-amino-acid polypeptide reads, in one-letter code: MICOS complex subunit MIC27 (268 aa).

Residues 1–27 (MAAIRMGKLTTMPAGLIYASVSVHAAK) constitute a mitochondrion transit peptide. The Mitochondrial intermembrane segment spans residues 28–110 (QEESKKQLVK…YVYLKNPPRD (83 aa)). Residues 111-129 (FLPKMGVITVSGLAGLVSA) traverse the membrane as a helical segment. The Mitochondrial matrix segment spans residues 130-137 (RKGSKFKK). The helical transmembrane segment at 138–155 (ITYPLGLATLGATVCYPV) threads the bilayer. At 156-268 (QSVIIAKVTA…EDIDMYSTRS (113 aa)) the chain is on the mitochondrial intermembrane side. The segment covering 187–200 (SKEESLPKPKEKTK) has biased composition (basic and acidic residues). A disordered region spans residues 187 to 268 (SKEESLPKPK…EDIDMYSTRS (82 aa)). Position 204 is a phosphoserine (Ser204). Residues 249–260 (KLMDHGQSHPED) show a composition bias toward basic and acidic residues.

This sequence belongs to the apolipoprotein O/MICOS complex subunit Mic27 family. In terms of assembly, component of the mitochondrial contact site and cristae organizing system (MICOS) complex, composed of at least MICOS10/MIC10, CHCHD3/MIC19, CHCHD6/MIC25, APOOL/MIC27, IMMT/MIC60, APOO/MIC23/MIC26 and MICOS13/MIC13. This complex was also known under the names MINOS or MitOS complex. The MICOS complex associates with mitochondrial outer membrane proteins SAMM50, MTX1 and MTX2 (together described as components of the mitochondrial outer membrane sorting assembly machinery (SAM) complex) and DNAJC11, mitochondrial inner membrane protein TMEM11 and with HSPA9. The MICOS and SAM complexes together with DNAJC11 are part of a large protein complex spanning both membranes termed the mitochondrial intermembrane space bridging (MIB) complex. Interacts with MICOS10/MIC10, IMMT/MIC60 and APOO/MIC23/MIC26.

It localises to the mitochondrion inner membrane. The protein localises to the mitochondrion. Its function is as follows. Component of the MICOS complex, a large protein complex of the mitochondrial inner membrane that plays crucial roles in the maintenance of crista junctions, inner membrane architecture, and formation of contact sites to the outer membrane. Specifically binds to cardiolipin (in vitro) but not to the precursor lipid phosphatidylglycerol. Plays a crucial role in crista junction formation and mitochondrial function,. This is MICOS complex subunit MIC27 (APOOL) from Homo sapiens (Human).